The sequence spans 197 residues: Probable nicotinate-nucleotide adenylyltransferase (197 aa).

It belongs to the NadD family.

It carries out the reaction nicotinate beta-D-ribonucleotide + ATP + H(+) = deamido-NAD(+) + diphosphate. It participates in cofactor biosynthesis; NAD(+) biosynthesis; deamido-NAD(+) from nicotinate D-ribonucleotide: step 1/1. Catalyzes the reversible adenylation of nicotinate mononucleotide (NaMN) to nicotinic acid adenine dinucleotide (NaAD). This Neisseria meningitidis serogroup C (strain 053442) protein is Probable nicotinate-nucleotide adenylyltransferase.